A 361-amino-acid chain; its full sequence is Phosphate acyltransferase (361 aa).

Residues V340 to T361 form a disordered region.

It belongs to the PlsX family. As to quaternary structure, homodimer. Probably interacts with PlsY.

The protein resides in the cytoplasm. It carries out the reaction a fatty acyl-[ACP] + phosphate = an acyl phosphate + holo-[ACP]. It functions in the pathway lipid metabolism; phospholipid metabolism. In terms of biological role, catalyzes the reversible formation of acyl-phosphate (acyl-PO(4)) from acyl-[acyl-carrier-protein] (acyl-ACP). This enzyme utilizes acyl-ACP as fatty acyl donor, but not acyl-CoA. The sequence is that of Phosphate acyltransferase from Anaeromyxobacter dehalogenans (strain 2CP-1 / ATCC BAA-258).